A 61-amino-acid polypeptide reads, in one-letter code: Bacteriocin sakacin-P (61 aa).

A propeptide spanning residues 1–18 is cleaved from the precursor; that stretch reads MEKFIELSLKEVTAITGG. A disulfide bridge links C27 with C32.

This sequence belongs to the bacteriocin class IIA/YGNGV family.

It is found in the secreted. Functionally, bactericidal activity; inhibits closely related Lactobacilli, Listeria monocytogenes and ivanovvi, Enterococcus faecalis, Carnobacterium sp and Brocothrix thermosphacta. This Latilactobacillus sakei (Lactobacillus sakei) protein is Bacteriocin sakacin-P (sakP).